Reading from the N-terminus, the 237-residue chain is MQKQAELYRGKAKTVYSTENPDLLVLEFRNDTSAGDGARIEQFDCKGMVNNKFNYFIMNKLAEAGIPTQMERLLSDTECLVKKLDMVPVECVVRNRAAGSLVKRLGIEEGIELNPPLFDLFLKNDAMHDPMVNESYCETFGWVSKENLARMKELTYKANDVLKKLFDDAGLILVDFKLEFGLYKGEVVLGDEFSPDGSRLWDKETLEKMDKDRFRQSLGGLIEAYEAVARRLGVQLD.

This sequence belongs to the SAICAR synthetase family.

It carries out the reaction 5-amino-1-(5-phospho-D-ribosyl)imidazole-4-carboxylate + L-aspartate + ATP = (2S)-2-[5-amino-1-(5-phospho-beta-D-ribosyl)imidazole-4-carboxamido]succinate + ADP + phosphate + 2 H(+). It participates in purine metabolism; IMP biosynthesis via de novo pathway; 5-amino-1-(5-phospho-D-ribosyl)imidazole-4-carboxamide from 5-amino-1-(5-phospho-D-ribosyl)imidazole-4-carboxylate: step 1/2. The sequence is that of Phosphoribosylaminoimidazole-succinocarboxamide synthase from Shigella dysenteriae serotype 1 (strain Sd197).